An 800-amino-acid chain; its full sequence is Phenylalanine--tRNA ligase beta subunit (800 aa).

A tRNA-binding domain is found at 39–148 (TAALAPFVVG…ADTPVGVPLV (110 aa)). The region spanning 402 to 478 (VWRRTIALRP…RLHGFDLVPA (77 aa)) is the B5 domain. The Mg(2+) site is built by Asp-456, Asp-462, Glu-465, and Glu-466. Residues 706 to 799 (SPFQPVARDF…VTKLTGGSLR (94 aa)) enclose the FDX-ACB domain.

The protein belongs to the phenylalanyl-tRNA synthetase beta subunit family. Type 1 subfamily. In terms of assembly, tetramer of two alpha and two beta subunits. Requires Mg(2+) as cofactor.

It localises to the cytoplasm. The catalysed reaction is tRNA(Phe) + L-phenylalanine + ATP = L-phenylalanyl-tRNA(Phe) + AMP + diphosphate + H(+). The chain is Phenylalanine--tRNA ligase beta subunit from Rhodospirillum rubrum (strain ATCC 11170 / ATH 1.1.1 / DSM 467 / LMG 4362 / NCIMB 8255 / S1).